The following is a 399-amino-acid chain: Acetylornithine aminotransferase (399 aa).

Pyridoxal 5'-phosphate is bound by residues 99-100 (GA) and phenylalanine 132. Position 135 (arginine 135) interacts with N(2)-acetyl-L-ornithine. 217-220 (DEVQ) lines the pyridoxal 5'-phosphate pocket. N6-(pyridoxal phosphate)lysine is present on lysine 246. Threonine 274 serves as a coordination point for N(2)-acetyl-L-ornithine. Threonine 275 is a pyridoxal 5'-phosphate binding site.

It belongs to the class-III pyridoxal-phosphate-dependent aminotransferase family. ArgD subfamily. In terms of assembly, homodimer. Pyridoxal 5'-phosphate is required as a cofactor.

It is found in the cytoplasm. It carries out the reaction N(2)-acetyl-L-ornithine + 2-oxoglutarate = N-acetyl-L-glutamate 5-semialdehyde + L-glutamate. It functions in the pathway amino-acid biosynthesis; L-arginine biosynthesis; N(2)-acetyl-L-ornithine from L-glutamate: step 4/4. This is Acetylornithine aminotransferase from Agrobacterium fabrum (strain C58 / ATCC 33970) (Agrobacterium tumefaciens (strain C58)).